The chain runs to 354 residues: NADH-quinone oxidoreductase subunit H (354 aa).

The next 8 membrane-spanning stretches (helical) occupy residues 25-45 (LVRI…LILW), 91-111 (WIYM…WAVI), 126-146 (LLYA…AGWA), 170-190 (MGFA…SGIV), 205-225 (FLSW…ISGI), 267-287 (IVIS…PFGF), 290-310 (FIPG…VFIW), and 330-350 (IFIP…MSPL).

This sequence belongs to the complex I subunit 1 family. As to quaternary structure, NDH-1 is composed of 14 different subunits. Subunits NuoA, H, J, K, L, M, N constitute the membrane sector of the complex.

The protein localises to the cell inner membrane. It catalyses the reaction a quinone + NADH + 5 H(+)(in) = a quinol + NAD(+) + 4 H(+)(out). Its function is as follows. NDH-1 shuttles electrons from NADH, via FMN and iron-sulfur (Fe-S) centers, to quinones in the respiratory chain. The immediate electron acceptor for the enzyme in this species is believed to be ubiquinone. Couples the redox reaction to proton translocation (for every two electrons transferred, four hydrogen ions are translocated across the cytoplasmic membrane), and thus conserves the redox energy in a proton gradient. This subunit may bind ubiquinone. The polypeptide is NADH-quinone oxidoreductase subunit H (Paraburkholderia xenovorans (strain LB400)).